The sequence spans 476 residues: GTPase Der (476 aa).

EngA-type G domains are found at residues 3–167 and 205–380; these read FTVA…GEER and LRVA…KVWN. GTP is bound by residues 9–16, 56–60, 119–122, 211–218, 258–262, and 323–326; these read GRPNVGKS, DTAGL, NKSE, GRPNAGKS, DTAGM, and NKWD. Positions 381–465 constitute a KH-like domain; it reads RRISTARLNR…PIRVHFRASE (85 aa).

The protein belongs to the TRAFAC class TrmE-Era-EngA-EngB-Septin-like GTPase superfamily. EngA (Der) GTPase family. In terms of assembly, associates with the 50S ribosomal subunit.

In terms of biological role, GTPase that plays an essential role in the late steps of ribosome biogenesis. The chain is GTPase Der from Rhizobium meliloti (strain 1021) (Ensifer meliloti).